Consider the following 104-residue polypeptide: Flagellar hook-basal body complex protein FliE (104 aa).

This sequence belongs to the FliE family.

The protein resides in the bacterial flagellum basal body. In Escherichia fergusonii (strain ATCC 35469 / DSM 13698 / CCUG 18766 / IAM 14443 / JCM 21226 / LMG 7866 / NBRC 102419 / NCTC 12128 / CDC 0568-73), this protein is Flagellar hook-basal body complex protein FliE.